A 366-amino-acid chain; its full sequence is tRNA N6-adenosine threonylcarbamoyltransferase (366 aa).

H119 and H123 together coordinate Fe cation. Residues 142-146, D175, G188, D192, and N281 contribute to the substrate site; that span reads LVSGG. D309 lines the Fe cation pocket.

This sequence belongs to the KAE1 / TsaD family. The cofactor is Fe(2+).

Its subcellular location is the cytoplasm. It catalyses the reaction L-threonylcarbamoyladenylate + adenosine(37) in tRNA = N(6)-L-threonylcarbamoyladenosine(37) in tRNA + AMP + H(+). In terms of biological role, required for the formation of a threonylcarbamoyl group on adenosine at position 37 (t(6)A37) in tRNAs that read codons beginning with adenine. Is involved in the transfer of the threonylcarbamoyl moiety of threonylcarbamoyl-AMP (TC-AMP) to the N6 group of A37, together with TsaE and TsaB. TsaD likely plays a direct catalytic role in this reaction. This chain is tRNA N6-adenosine threonylcarbamoyltransferase, found in Synechococcus sp. (strain JA-3-3Ab) (Cyanobacteria bacterium Yellowstone A-Prime).